We begin with the raw amino-acid sequence, 31 residues long: MESVAYIVVLTMALAVLFFAIAFREPPRIQK.

Residues 3–23 traverse the membrane as a helical segment; sequence SVAYIVVLTMALAVLFFAIAF.

This sequence belongs to the PsbT family. As to quaternary structure, PSII is composed of 1 copy each of membrane proteins PsbA, PsbB, PsbC, PsbD, PsbE, PsbF, PsbH, PsbI, PsbJ, PsbK, PsbL, PsbM, PsbT, PsbX, PsbY, PsbZ, Psb30/Ycf12, peripheral proteins PsbO, CyanoQ (PsbQ), PsbU, PsbV and a large number of cofactors. It forms dimeric complexes.

The protein localises to the cellular thylakoid membrane. Functionally, found at the monomer-monomer interface of the photosystem II (PS II) dimer, plays a role in assembly and dimerization of PSII. PSII is a light-driven water plastoquinone oxidoreductase, using light energy to abstract electrons from H(2)O, generating a proton gradient subsequently used for ATP formation. This chain is Photosystem II reaction center protein T, found in Crocosphaera subtropica (strain ATCC 51142 / BH68) (Cyanothece sp. (strain ATCC 51142)).